The following is a 165-amino-acid chain: Aspartate carbamoyltransferase regulatory chain (165 aa).

Zn(2+) is bound by residues cysteine 121, cysteine 126, cysteine 149, and cysteine 152.

Belongs to the PyrI family. Contains catalytic and regulatory chains. The cofactor is Zn(2+).

Functionally, involved in allosteric regulation of aspartate carbamoyltransferase. The chain is Aspartate carbamoyltransferase regulatory chain from Methanoregula boonei (strain DSM 21154 / JCM 14090 / 6A8).